The sequence spans 197 residues: Protein GrpE (197 aa).

Residues 1–12 (MTDSDGKTDKSG) are compositionally biased toward basic and acidic residues. The tract at residues 1–35 (MTDSDGKTDKSGEPAAEVEPVVSKPYVMPDDPEDD) is disordered.

This sequence belongs to the GrpE family. In terms of assembly, homodimer.

Its subcellular location is the cytoplasm. Functionally, participates actively in the response to hyperosmotic and heat shock by preventing the aggregation of stress-denatured proteins, in association with DnaK and GrpE. It is the nucleotide exchange factor for DnaK and may function as a thermosensor. Unfolded proteins bind initially to DnaJ; upon interaction with the DnaJ-bound protein, DnaK hydrolyzes its bound ATP, resulting in the formation of a stable complex. GrpE releases ADP from DnaK; ATP binding to DnaK triggers the release of the substrate protein, thus completing the reaction cycle. Several rounds of ATP-dependent interactions between DnaJ, DnaK and GrpE are required for fully efficient folding. The protein is Protein GrpE of Nitrobacter winogradskyi (strain ATCC 25391 / DSM 10237 / CIP 104748 / NCIMB 11846 / Nb-255).